A 628-amino-acid polypeptide reads, in one-letter code: Set1/Ash2 histone methyltransferase complex subunit ASH2 (628 aa).

Residue Met-1 is modified to N-acetylmethionine. Positions 1 to 18 are enriched in gly residues; that stretch reads MAAAGAGPGQEAGAGPGP. The PHD-type; atypical zinc finger occupies 1–66; that stretch reads MAAAGAGPGQ…SGEAEGGEAN (66 aa). Residues 1-107 form a disordered region; it reads MAAAGAGPGQ…QAGSVDEENG (107 aa). The span at 36-65 shows a compositional bias: low complexity; sequence AAGAAAPPGEGISAAPTVEPSSGEAEGGEA. Residues 67–177 form a DNA-binding region; the sequence is LVDVSGGLET…MCLSALANLT (111 aa). At Ser-101 the chain carries Phosphoserine. The C4-type zinc-finger motif lies at 117 to 150; it reads CGICTKWFTADTFGIDTSSCLPFMTNYSFHCNVC. Basic and acidic residues predominate over residues 235–252; it reads LVKEHPDPGSKDPEEDYP. The disordered stretch occupies residues 235–331; that stretch reads LVKEHPDPGS…AQRLPPHGYP (97 aa). A compositionally biased stretch (polar residues) spans 270–282; that stretch reads NQKQSSAVSTSGN. Positions 283-295 are enriched in gly residues; the sequence is LNGGIAAGSSGKG. Asymmetric dimethylarginine; by PRMT1 and PRMT5 is present on Arg-296. Position 316 is a phosphoserine (Ser-316). The interval 316–628 is interaction with RBBP5; it reads SDPLFSAQRL…DGRRSPPWEP (313 aa). Positions 360–583 constitute a B30.2/SPRY domain; that stretch reads LDCWAGKPIP…VSINFGPCFK (224 aa).

In terms of assembly, interacts with HCFC1. Core component of several methyltransferase-containing complexes including MLL1/MLL, MLL2/3 (also named ASCOM complex) and MLL4/WBP7. Each complex is at least composed of ASH2L, RBBP5, WDR5, DPY30, one or more specific histone methyltransferases (KMT2A/MLL1, KMT2D/MLL2, KMT2C/MLL3 and KMT2B/MLL4), and the facultative components PAGR1, BACC1, CHD8, E2F6, HCFC1, HCFC2, HSP70, INO80C, KDM6A, KANSL1, LAS1L, MAX, MCRS1, MEN1, MGA, KAT8/MOF, NCOA6, PAXIP1/PTIP, PELP1, PHF20, PRP31, RING2, RUVB1/TIP49A, RUVB2/TIP49B, SENP3, TAF1, TAF4, TAF6, TAF7, TAF9, TEX10 and alpha- and beta-tubulin. Component of the SET1 complex, at least composed of the catalytic subunit (SETD1A or SETD1B), WDR5, WDR82, RBBP5, ASH2L/ASH2, CXXC1/CFP1, HCFC1 and DPY30. Found in a complex with RBBP5, ASH2L, DPY30, KMT2A, KMT2D and WDR5. Component of a histone methylation complex composed of at least ZNF335, RBBP5, ASH2L and WDR5; the complex may have histone H3-specific methyltransferase activity, however does not have specificity for 'Lys-4' of histone H3. Within the complex, interacts with ZNF335. Interacts with RBBP5. Components of this complex may associate with components of a nuclear receptor-mediated transcription complex to form a complex at least composed of ZNF335, HCFC1, CCAR2, EMSY, MKI67, RBBP5, ASH2L and WDR5. Within this complex also interacts with CCAR2 and EMSY. Interacts with DPY30. Interacts with SETD1A and SETD1B. Post-translationally, both monomethylated and dimethylated on arginine residues in the C-terminus. Arg-296 is the major site. Methylation is not required for nuclear localization, nor for MLL complex integrity or maintenance of global histone H3K4me3 levels. Ubiquitously expressed. Predominantly expressed in adult heart and testis and fetal lung and liver, with barely detectable expression in adult lung, liver, kidney, prostate, and peripheral leukocytes.

The protein localises to the nucleus. Transcriptional regulator. Component or associated component of some histone methyltransferase complexes which regulates transcription through recruitment of those complexes to gene promoters. Component of the Set1/Ash2 histone methyltransferase (HMT) complex, a complex that specifically methylates 'Lys-4' of histone H3, but not if the neighboring 'Lys-9' residue is already methylated. As part of the MLL1/MLL complex it is involved in methylation and dimethylation at 'Lys-4' of histone H3. May play a role in hematopoiesis. In association with RBBP5 and WDR5, stimulates the histone methyltransferase activities of KMT2A, KMT2B, KMT2C, KMT2D, SETD1A and SETD1B. This is Set1/Ash2 histone methyltransferase complex subunit ASH2 (ASH2L) from Homo sapiens (Human).